Reading from the N-terminus, the 954-residue chain is Glycine dehydrogenase (decarboxylating) (954 aa).

The span at 1–13 (MTELLQSLSTQNE) shows a compositional bias: polar residues. A disordered region spans residues 1-24 (MTELLQSLSTQNEFVARHNGPNKS). Position 704 is an N6-(pyridoxal phosphate)lysine (lysine 704).

Belongs to the GcvP family. In terms of assembly, the glycine cleavage system is composed of four proteins: P, T, L and H. Pyridoxal 5'-phosphate is required as a cofactor.

The enzyme catalyses N(6)-[(R)-lipoyl]-L-lysyl-[glycine-cleavage complex H protein] + glycine + H(+) = N(6)-[(R)-S(8)-aminomethyldihydrolipoyl]-L-lysyl-[glycine-cleavage complex H protein] + CO2. In terms of biological role, the glycine cleavage system catalyzes the degradation of glycine. The P protein binds the alpha-amino group of glycine through its pyridoxal phosphate cofactor; CO(2) is released and the remaining methylamine moiety is then transferred to the lipoamide cofactor of the H protein. The protein is Glycine dehydrogenase (decarboxylating) of Vibrio campbellii (strain ATCC BAA-1116).